A 437-amino-acid polypeptide reads, in one-letter code: Protein translocase subunit SecY (437 aa).

10 consecutive transmembrane segments (helical) span residues 19-39 (LFTL…APGV), 68-88 (LLQI…SIIL), 121-141 (VALA…GALF), 156-176 (IFTT…VMWL), 188-208 (GMSI…LWAI), 218-238 (WIEF…VVFV), 274-294 (GVIP…IVQF), 317-337 (YIAT…AISF), 378-398 (SLYL…FGGA), and 400-420 (QNFP…LETV).

The protein belongs to the SecY/SEC61-alpha family. In terms of assembly, component of the Sec protein translocase complex. Heterotrimer consisting of SecY, SecE and SecG subunits. The heterotrimers can form oligomers, although 1 heterotrimer is thought to be able to translocate proteins. Interacts with the ribosome. Interacts with SecDF, and other proteins may be involved. Interacts with SecA.

Its subcellular location is the cell membrane. The central subunit of the protein translocation channel SecYEG. Consists of two halves formed by TMs 1-5 and 6-10. These two domains form a lateral gate at the front which open onto the bilayer between TMs 2 and 7, and are clamped together by SecE at the back. The channel is closed by both a pore ring composed of hydrophobic SecY resides and a short helix (helix 2A) on the extracellular side of the membrane which forms a plug. The plug probably moves laterally to allow the channel to open. The ring and the pore may move independently. In Streptomyces griseus, this protein is Protein translocase subunit SecY.